The chain runs to 277 residues: Putative thiosulfate sulfurtransferase (277 aa).

Rhodanese domains follow at residues 18 to 125 (HAPK…PLSS) and 154 to 274 (AINV…APIE). The active-site Cysteine persulfide intermediate is the C233. R238 contacts substrate.

The enzyme catalyses thiosulfate + hydrogen cyanide = thiocyanate + sulfite + 2 H(+). In terms of biological role, may be a sulfotransferase involved in the formation of thiosulfate. In Mycobacterium tuberculosis (strain CDC 1551 / Oshkosh), this protein is Putative thiosulfate sulfurtransferase (cysA1).